The primary structure comprises 227 residues: 2-C-methyl-D-erythritol 4-phosphate cytidylyltransferase (227 aa).

Belongs to the IspD/TarI cytidylyltransferase family. IspD subfamily.

It catalyses the reaction 2-C-methyl-D-erythritol 4-phosphate + CTP + H(+) = 4-CDP-2-C-methyl-D-erythritol + diphosphate. It participates in isoprenoid biosynthesis; isopentenyl diphosphate biosynthesis via DXP pathway; isopentenyl diphosphate from 1-deoxy-D-xylulose 5-phosphate: step 2/6. Its function is as follows. Catalyzes the formation of 4-diphosphocytidyl-2-C-methyl-D-erythritol from CTP and 2-C-methyl-D-erythritol 4-phosphate (MEP). The chain is 2-C-methyl-D-erythritol 4-phosphate cytidylyltransferase from Dehalococcoides mccartyi (strain CBDB1).